We begin with the raw amino-acid sequence, 96 residues long: UPF0235 protein Sputw3181_1321 (96 aa).

This sequence belongs to the UPF0235 family.

This Shewanella sp. (strain W3-18-1) protein is UPF0235 protein Sputw3181_1321.